We begin with the raw amino-acid sequence, 866 residues long: Dynamin-2 (866 aa).

One can recognise a Dynamin-type G domain in the interval 28–294 (HLDLPQIAVV…LTNHIRESLP (267 aa)). Positions 38–45 (GGQSAGKS) are G1 motif. GDP is bound by residues S41, G43, K44, S45, S46, R59, and G60. The G2 motif stretch occupies residues 64–66 (VTR). The tract at residues 136 to 139 (DLPG) is G3 motif. The G4 motif stretch occupies residues 205 to 208 (TKLD). Positions 206, 208, and 211 each coordinate GDP. Y231 is subject to Phosphotyrosine. The interval 235-238 (VNRS) is G5 motif. Residues N236, R237, and Q239 each contribute to the GDP site. Position 299 is an N6-acetyllysine (K299). The PH domain maps to 515-621 (QVIRRGWLTI…WKASFLRAGV (107 aa)). At Y593 the chain carries Phosphotyrosine. K594 is subject to N6-acetyllysine. The region spanning 649 to 740 (VETIRNLVDS…IIGDISTSTV (92 aa)) is the GED domain. The segment at 737–866 (TSTVSTPVPP…IRPAEPSLLD (130 aa)) is disordered. A Phosphothreonine modification is found at T751. Residues 752-763 (WIQNTSSHSPTP) are compositionally biased toward polar residues. S760 carries the post-translational modification Phosphoserine; by CDK1. Pro residues-rich tracts occupy residues 784–794 (TPGPPLIPVPV), 802–811 (PPIPSRPGPH), and 822–851 (SAPPQIPSRPARIPPGIPPGVPSRRPPAAP).

It belongs to the TRAFAC class dynamin-like GTPase superfamily. Dynamin/Fzo/YdjA family. Oligomerizes into a helical polymer that self-assembles around the vesicle membrane, when associated to the menbrane through lipid binding. Interacts with SHANK1 and SHANK2. Interacts with SNX9. Interacts (via C-terminal proline-rich domain (PRD)) with SNX18 (via SH3 domain); this interaction regulates ATG9A and ATG16L1 trafficking from recycling endosomes to sites of autophagosome formation. Interacts with SNX33 (via SH3 domain). Interacts with MYO1E (via SH3 domain). Interacts with PSTPIP1 (via SH3 domain). Interacts with CTNND2. Interacts (via C-terminal proline-rich domain (PRD)) with BIN1 (via SH3 domain); this interaction allows the recruitment of DNM2 to the membrane tubules and inhibits self-assembly-stimulated GTPase activity on the membrane. Interacts with GABARAP, GABARAPL1 and GABARAPL2. Interacts with MAP1LC3B (the lipidate and non-lipidated LC3 form); this interaction mediates recycling endosome scission leading to autophagosome release. Interacts with ITSN1. Interacts with MYOF. Interacts (via C-terminal proline-rich domain (PRD)) with SH3BP4 (via SH3 domain); this interaction controls the GTPase activity and is prevented by EGFR-induced tyrosine phosphorylation of either DNM2 or SH3BP4. May interact with PIK3C3. May be a component of a complex composed of RAB5A (in GDP-bound form), DYN2 and PIK3C3. Interacts with SDC4; this interaction is markedly enhanced at focal ahesion site upon induction of focal adhesions and stress-fiber formation. Interacts with ACTN1. Interacts with CTTN; this interaction stimulates the intrinsic GTPase activity of DNM2 and stabilizes the association of DNM2 and actin filaments; in addition this interaction is stimulated by ligand binding to the receptor, leading to the recruitment of the DNM2-CTTN complex to the sequestered receptor-ligand complex to its internalization. Interacts with NOSTRIN (via SH3 domain); this interaction allows the recruitment of NOS3 to dynamin-positive structures. Interacts with TUBG1; this interaction may participate in centrosome cohesion. Phosphorylation at Ser-844 by GSK3-alpha relieves the inhibition of BIN1 and promotes endocytosis. Phosphorylation at Ser-760 by CDK1 is greatly increased upon mitotic entry. It regulates cytokinesis downstream of calcineurin, and does not affect clathrin-mediated endocytosis. Dephosphorylated by calcineurin/PP2 during cytokinesis in a Ca(2+)- and calmodulin-dependent manner. Phosphorylated on tyrosine residues by EGFR and after activation of SRC.

The protein resides in the cytoplasm. The protein localises to the cytoskeleton. Its subcellular location is the cytoplasmic vesicle. It localises to the clathrin-coated vesicle. It is found in the cell projection. The protein resides in the uropodium. The protein localises to the endosome. Its subcellular location is the microtubule organizing center. It localises to the centrosome. It is found in the centriole. The protein resides in the recycling endosome. The protein localises to the phagocytic cup. Its subcellular location is the phagosome membrane. It localises to the podosome. It is found in the cell junction. The protein resides in the postsynaptic density. The protein localises to the synapse. Its subcellular location is the synaptosome. It localises to the midbody. It is found in the membrane. The protein resides in the clathrin-coated pit. It carries out the reaction GTP + H2O = GDP + phosphate + H(+). In terms of biological role, catalyzes the hydrolysis of GTP and utilizes this energy to mediate vesicle scission at plasma membrane during endocytosis and filament remodeling at many actin structures during organization of the actin cytoskeleton. Plays an important role in vesicular trafficking processes, namely clathrin-mediated endocytosis (CME), exocytic and clathrin-coated vesicle from the trans-Golgi network, and PDGF stimulated macropinocytosis. During vesicular trafficking process, associates to the membrane, through lipid binding, and self-assembles into ring-like structure through oligomerization to form a helical polymer around the vesicle membrane and leading to vesicle scission. Plays a role in organization of the actin cytoskeleton by mediating arrangement of stress fibers and actin bundles in podocytes. During organization of the actin cytoskeleton, self-assembles into ring-like structure that directly bundles actin filaments to form typical membrane tubules decorated with dynamin spiral polymers. Self-assembly increases GTPase activity and the GTP hydrolysis causes the rapid depolymerization of dynamin spiral polymers, and results in dispersion of actin bundles. Remodels, through its interaction with CTTN, bundled actin filaments in a GTPase-dependent manner and plays a role in orchestrating the global actomyosin cytoskeleton. The interaction with CTTN stabilizes the interaction of DNM2 and actin filaments and stimulates the intrinsic GTPase activity that results in actin filament-barbed ends and increases the sensitivity of filaments in bundles to the actin depolymerizing factor, CFL1. Plays a role in the autophagy process, by participating in the formation of ATG9A vesicles destined for the autophagosomes through its interaction with SNX18, by mediating recycling endosome scission leading to autophagosome release through MAP1LC3B interaction. Also regulates maturation of apoptotic cell corpse-containing phagosomes by recruiting PIK3C3 to the phagosome membrane. Also plays a role in cytokinesis. May participate in centrosome cohesion through its interaction with TUBG1. Plays a role in the regulation of neuron morphology, axon growth and formation of neuronal growth cones. Involved in membrane tubulation. This chain is Dynamin-2, found in Bos taurus (Bovine).